The sequence spans 359 residues: sn-1 acyl-lipid omega-3 desaturase (ferredoxin) (359 aa).

Helical transmembrane passes span 44–64 (LGYF…AAYL) and 67–87 (WFFY…LFVV). The short motif at 89–93 (HDCGH) is the Histidine box-1 element. Residues 125–129 (HRTHH) carry the Histidine box-2 motif. The next 3 membrane-spanning stretches (helical) occupy residues 153–173 (AWYE…IYLF), 206–226 (LAAF…LFLL), and 228–248 (FYVA…FLHH). Positions 291 to 295 (HHIFS) match the Histidine box-3 motif.

It belongs to the fatty acid desaturase type 2 family. Fe(2+) is required as a cofactor.

It is found in the membrane. It catalyses the reaction a 1-[(9Z,12Z)-octadecdienoyl]-2-acyl-glycerolipid + 2 reduced [2Fe-2S]-[ferredoxin] + O2 + 2 H(+) = a 1-[(9Z,12Z,15Z)-octadectrienoyl]-2-acyl-glycerolipid + 2 oxidized [2Fe-2S]-[ferredoxin] + 2 H2O. It carries out the reaction a 1-[(6Z,9Z,12Z)-octadectrienoyl]-2-acyl-glycerolipid + 2 reduced [2Fe-2S]-[ferredoxin] + O2 + 2 H(+) = a 1-[(6Z,9Z,12Z,15Z)-octadectetraenoyl]-2-acyl-glycerolipid + 2 oxidized [2Fe-2S]-[ferredoxin] + 2 H2O. Its pathway is lipid metabolism; polyunsaturated fatty acid biosynthesis. Desaturase involved in fatty acid biosynthesis. Introduces a double bond at carbon 15 of linoleoyl and gamma-linolenoyl groups attached to the sn-1 position of the glycerol moiety of membrane glycerolipids. This is sn-1 acyl-lipid omega-3 desaturase (ferredoxin) from Synechocystis sp. (strain ATCC 27184 / PCC 6803 / Kazusa).